The chain runs to 458 residues: Serine--tRNA ligase (458 aa).

255 to 257 contributes to the L-serine binding site; the sequence is TSE. ATP contacts are provided by residues 286 to 288 and Val-302; that span reads RKE. Position 309 (Glu-309) interacts with L-serine. ATP is bound at residue 373–376; that stretch reads ELVS. Thr-409 is a binding site for L-serine.

The protein belongs to the class-II aminoacyl-tRNA synthetase family. Type-1 seryl-tRNA synthetase subfamily. Homodimer. The tRNA molecule binds across the dimer.

The protein resides in the cytoplasm. It carries out the reaction tRNA(Ser) + L-serine + ATP = L-seryl-tRNA(Ser) + AMP + diphosphate + H(+). The enzyme catalyses tRNA(Sec) + L-serine + ATP = L-seryl-tRNA(Sec) + AMP + diphosphate + H(+). Its pathway is aminoacyl-tRNA biosynthesis; selenocysteinyl-tRNA(Sec) biosynthesis; L-seryl-tRNA(Sec) from L-serine and tRNA(Sec): step 1/1. Functionally, catalyzes the attachment of serine to tRNA(Ser). Is also able to aminoacylate tRNA(Sec) with serine, to form the misacylated tRNA L-seryl-tRNA(Sec), which will be further converted into selenocysteinyl-tRNA(Sec). The protein is Serine--tRNA ligase of Ignicoccus hospitalis (strain KIN4/I / DSM 18386 / JCM 14125).